The chain runs to 160 residues: MIHDRIEDFLASLPRTGALAGLDLGTKTVGVAVSDGLRRIATPLLTVRRTKFTEDAAKLKAIADERRLVGIVLGLPRNMDGSEGPRAQSTRAFARNLVQVLPLPVGFWDERLSTVAAERALLEADTSRKRRAEVIDHVAAGYILQGVLDRLDWLGREGGA.

It belongs to the YqgF nuclease family.

It localises to the cytoplasm. Could be a nuclease involved in processing of the 5'-end of pre-16S rRNA. The chain is Putative pre-16S rRNA nuclease from Cereibacter sphaeroides (strain KD131 / KCTC 12085) (Rhodobacter sphaeroides).